A 487-amino-acid chain; its full sequence is Glutamyl-tRNA(Gln) amidotransferase subunit A (487 aa).

Residues Lys-77 and Ser-152 each act as charge relay system in the active site. Ser-176 acts as the Acyl-ester intermediate in catalysis.

This sequence belongs to the amidase family. GatA subfamily. As to quaternary structure, heterotrimer of A, B and C subunits.

It catalyses the reaction L-glutamyl-tRNA(Gln) + L-glutamine + ATP + H2O = L-glutaminyl-tRNA(Gln) + L-glutamate + ADP + phosphate + H(+). Functionally, allows the formation of correctly charged Gln-tRNA(Gln) through the transamidation of misacylated Glu-tRNA(Gln) in organisms which lack glutaminyl-tRNA synthetase. The reaction takes place in the presence of glutamine and ATP through an activated gamma-phospho-Glu-tRNA(Gln). In Lactiplantibacillus plantarum (strain ATCC BAA-793 / NCIMB 8826 / WCFS1) (Lactobacillus plantarum), this protein is Glutamyl-tRNA(Gln) amidotransferase subunit A.